Here is an 810-residue protein sequence, read N- to C-terminus: Protein 4.1 (810 aa).

Residues 1–124 form a disordered region; the sequence is MTTEKSLVAE…KEIEFGTSLD (124 aa). Residue Ser14 is modified to Phosphoserine. The residue at position 61 (Thr61) is a Phosphothreonine. The segment covering 62–76 has biased composition (basic and acidic residues); sequence PTHEDLTKNKERTSE. Phosphoserine occurs at positions 85, 86, 96, 105, 122, 150, 152, 153, 189, and 192. Basic and acidic residues predominate over residues 102 to 118; that stretch reads DVESAKEKCEGGQKEIE. The interval 152-203 is disordered; the sequence is SSAETQPAQEEHREDPDFETKEGGGLEECSKIEVKEESPESKAERELKASQK. Over residues 160–200 the composition is skewed to basic and acidic residues; the sequence is QEEHREDPDFETKEGGGLEECSKIEVKEESPESKAERELKA. An FERM domain is found at 211 to 492; sequence MHCKVSLLDD…EHHTFFRLTS (282 aa). Tyr223 is subject to Phosphotyrosine. Residue Thr379 is modified to Phosphothreonine. Positions 518-613 are disordered; it reads TRQASALIDR…DQAEPEPTEV (96 aa). Phosphoserine occurs at positions 522, 541, 543, and 555. The segment covering 587–601 has biased composition (basic and acidic residues); sequence AQKETVKDEEKKEEG. A spectrin--actin-binding region spans residues 615-659; that stretch reads KDLDKSQEEIKKHHASISELKKNFMESVPEPRPSEWDKRLSTHSP. A phosphoserine mark is found at Ser620, Ser630, Ser655, and Ser658. The C-terminal (CTD) stretch occupies residues 660–810; that stretch reads FRTLNINGQL…VHQETEISEE (151 aa). Phosphothreonine is present on residues Thr682 and Thr805.

Binds with a high affinity to glycophorin and with lower affinity to band III protein. Associates with the nuclear mitotic apparatus. Binds calmodulin, CPAP and DLG1. Also found to associate with contractile apparatus and tight junctions. Interacts with NUMA1; this interaction is negatively regulated by CDK1 during metaphase and promotes for anaphase-specific localization of NUMA1 in symmetrically dividing cells. Interacts with ATP2B1; regulates small intestinal calcium absorption through regulation of membrane expression of ATP2B1. In terms of processing, O-glycosylated; contains N-acetylglucosamine side chains in the C-terminal domain. Phosphorylated at multiple sites by different protein kinases and each phosphorylation event selectively modulates the protein's functions.

The protein localises to the nucleus. It localises to the cytoplasm. It is found in the cytoskeleton. Its subcellular location is the cell cortex. Its function is as follows. Protein 4.1 is a major structural element of the erythrocyte membrane skeleton. It plays a key role in regulating membrane physical properties of mechanical stability and deformability by stabilizing spectrin-actin interaction. Recruits DLG1 to membranes. Required for dynein-dynactin complex and NUMA1 recruitment at the mitotic cell cortex during anaphase. The protein is Protein 4.1 of Canis lupus familiaris (Dog).